An 816-amino-acid polypeptide reads, in one-letter code: Auxin response factor 12 (816 aa).

Over residues 1–10 (MSSSSAASIG) the composition is skewed to low complexity. Residues 1-24 (MSSSSAASIGPPQPPPPPAPPEEE) are disordered. Over residues 11–20 (PPQPPPPPAP) the composition is skewed to pro residues. The TF-B3 DNA-binding region spans 135–237 (FCKTLTASDT…QLLLGIRRAS (103 aa)). A disordered region spans residues 526–565 (NDQKQKIQPDQSYQVPTSAVLPSPTSLPSHLREKFGFSDP). The 85-residue stretch at 717–801 (RTFVKVYKSG…WYIKILSPED (85 aa)) folds into the PB1 domain.

The protein belongs to the ARF family. As to quaternary structure, homodimers and heterodimers.

Its subcellular location is the nucleus. In terms of biological role, auxin response factors (ARFs) are transcriptional factors that bind specifically to the DNA sequence 5'-TGTCTC-3' found in the auxin-responsive promoter elements (AuxREs). The polypeptide is Auxin response factor 12 (ARF12) (Oryza sativa subsp. indica (Rice)).